A 410-amino-acid chain; its full sequence is Translation initiation factor 2 subunit gamma (410 aa).

A tr-type G domain is found at 6-203 (QSEINIGMVG…AIEDLMPTPE (198 aa)). Positions 15 to 22 (GHVDHGKT) are G1. Asp-18, Thr-22, Gly-43, and Ser-45 together coordinate Mg(2+). 18-23 (DHGKTS) provides a ligand contact to GTP. Positions 43 to 47 (GISIR) are G2. Cys-58, Cys-61, Cys-73, and Cys-76 together coordinate Zn(2+). The G3 stretch occupies residues 90 to 93 (DAPG). Residues 146–149 (NKID) and 181–183 (SAH) contribute to the GTP site. A G4 region spans residues 146–149 (NKID). A G5 region spans residues 181–183 (SAH).

Belongs to the TRAFAC class translation factor GTPase superfamily. Classic translation factor GTPase family. EIF2G subfamily. In terms of assembly, heterotrimer composed of an alpha, a beta and a gamma chain. Requires Mg(2+) as cofactor.

It carries out the reaction GTP + H2O = GDP + phosphate + H(+). Functionally, eIF-2 functions in the early steps of protein synthesis by forming a ternary complex with GTP and initiator tRNA. This is Translation initiation factor 2 subunit gamma from Methanococcus aeolicus (strain ATCC BAA-1280 / DSM 17508 / OCM 812 / Nankai-3).